A 60-amino-acid polypeptide reads, in one-letter code: UPF0337 protein SAV1625 (60 aa).

Residues 18 to 41 (VGNVTDNKELEKEGQQDKATGKAK) form a disordered region. The segment covering 23–41 (DNKELEKEGQQDKATGKAK) has biased composition (basic and acidic residues).

Belongs to the UPF0337 (CsbD) family.

In Staphylococcus aureus (strain Mu50 / ATCC 700699), this protein is UPF0337 protein SAV1625.